Reading from the N-terminus, the 611-residue chain is DNA mismatch repair protein MutL (611 aa).

Residues 353-387 (NRQAAGGNHFATPAPAAAPRPASTASSSWQRQEPV) are disordered. Low complexity predominate over residues 363–380 (ATPAPAAAPRPASTASSS).

Belongs to the DNA mismatch repair MutL/HexB family.

Functionally, this protein is involved in the repair of mismatches in DNA. It is required for dam-dependent methyl-directed DNA mismatch repair. May act as a 'molecular matchmaker', a protein that promotes the formation of a stable complex between two or more DNA-binding proteins in an ATP-dependent manner without itself being part of a final effector complex. This Erwinia tasmaniensis (strain DSM 17950 / CFBP 7177 / CIP 109463 / NCPPB 4357 / Et1/99) protein is DNA mismatch repair protein MutL.